Reading from the N-terminus, the 400-residue chain is Probable glycosyltransferase WbjE (400 aa).

This sequence belongs to the glycosyltransferase group 1 family. Glycosyltransferase 4 subfamily.

Its pathway is bacterial outer membrane biogenesis; LPS O-antigen biosynthesis. The chain is Probable glycosyltransferase WbjE (wbjE) from Pseudomonas aeruginosa.